An 83-amino-acid polypeptide reads, in one-letter code: MSSGGLLLLLGLLTLWAELTPVSSKDRPHFCHLPADTGPCKARFQAFYYHPVHRKCLEFIYGGCEGNANNFKTIDECKRTCAA.

An N-terminal signal peptide occupies residues Met1–Ser24. The region spanning Cys31–Cys81 is the BPTI/Kunitz inhibitor domain. Intrachain disulfides connect Cys31-Cys81, Cys40-Cys64, and Cys56-Cys77.

The protein belongs to the venom Kunitz-type family. Expressed by the venom gland.

Its subcellular location is the secreted. In terms of biological role, serine protease inhibitor. This chain is Kunitz-type serine protease inhibitor 28, found in Drysdalia coronoides (White-lipped snake).